Reading from the N-terminus, the 129-residue chain is Small ribosomal subunit protein uS9 (129 aa).

The tract at residues 107–129 (SRVVERKKPGKKKARRSPQFSKR) is disordered. Residues 114–129 (KPGKKKARRSPQFSKR) show a composition bias toward basic residues.

This sequence belongs to the universal ribosomal protein uS9 family.

In Sulfurovum sp. (strain NBC37-1), this protein is Small ribosomal subunit protein uS9.